A 426-amino-acid chain; its full sequence is MLDNQLLRENPQYVATQLLKRGFQFDAVTFSQLEEKRKALQVSTQSLQNERNLRSKAIGEAKSRGENIGPMREEVNKLGAILEQQKTELDEVLKQIEVISLSLPNIPHESVPVGKDELDNQEIRKWGDVPAFSFPVKSHDELGEALGQMDFALAAKITGSRFVVMKGHLARLHRALIQFMLDIHIQQHGYQEIYVPYIVNADSLLGTGQLPKFEADLFKLTGDNGYYLTSTSEIPVTNTVREMILSAEQLPIRYVCHSPCFRSEAGSYGKDTKGMIRQHQFEKVELVWITKPEDSYNALEQLTQHAEIILQRLNLPYRVVALCTGDIGAGSAKTYDLEVWLPSQNTYREISSCSNMEAFQARRMKARFRNPDTNEIQLVHTLNGSGLAVGRTLVAIMENYQDEHGNIHIPDALKPYLGGIDIISVK.

An L-serine-binding site is contributed by 231-233 (TSE). 262–264 (RSE) is a binding site for ATP. Residue E285 participates in L-serine binding. 349–352 (EISS) serves as a coordination point for ATP. S385 is an L-serine binding site.

It belongs to the class-II aminoacyl-tRNA synthetase family. Type-1 seryl-tRNA synthetase subfamily. In terms of assembly, homodimer. The tRNA molecule binds across the dimer.

The protein resides in the cytoplasm. The catalysed reaction is tRNA(Ser) + L-serine + ATP = L-seryl-tRNA(Ser) + AMP + diphosphate + H(+). It catalyses the reaction tRNA(Sec) + L-serine + ATP = L-seryl-tRNA(Sec) + AMP + diphosphate + H(+). Its pathway is aminoacyl-tRNA biosynthesis; selenocysteinyl-tRNA(Sec) biosynthesis; L-seryl-tRNA(Sec) from L-serine and tRNA(Sec): step 1/1. Its function is as follows. Catalyzes the attachment of serine to tRNA(Ser). Is also able to aminoacylate tRNA(Sec) with serine, to form the misacylated tRNA L-seryl-tRNA(Sec), which will be further converted into selenocysteinyl-tRNA(Sec). In Legionella pneumophila subsp. pneumophila (strain Philadelphia 1 / ATCC 33152 / DSM 7513), this protein is Serine--tRNA ligase.